A 207-amino-acid chain; its full sequence is Small ribosomal subunit protein uS4 (207 aa).

An S4 RNA-binding domain is found at arginine 98 to asparagine 164.

The protein belongs to the universal ribosomal protein uS4 family. As to quaternary structure, part of the 30S ribosomal subunit. Contacts protein S5. The interaction surface between S4 and S5 is involved in control of translational fidelity.

Its function is as follows. One of the primary rRNA binding proteins, it binds directly to 16S rRNA where it nucleates assembly of the body of the 30S subunit. In terms of biological role, with S5 and S12 plays an important role in translational accuracy. The sequence is that of Small ribosomal subunit protein uS4 from Clostridioides difficile (strain 630) (Peptoclostridium difficile).